The chain runs to 517 residues: GMP synthase [glutamine-hydrolyzing] (517 aa).

A Glutamine amidotransferase type-1 domain is found at 9-199 (RILILDFGSQ…VLGVCGCERL (191 aa)). The active-site Nucleophile is Cys86. Active-site residues include His173 and Glu175. Residues 200–392 (WTSESIIEDA…LGLPYNMLYR (193 aa)) enclose the GMPS ATP-PPase domain. Residue 227 to 233 (SGGVDSS) participates in ATP binding.

Homodimer.

The enzyme catalyses XMP + L-glutamine + ATP + H2O = GMP + L-glutamate + AMP + diphosphate + 2 H(+). It functions in the pathway purine metabolism; GMP biosynthesis; GMP from XMP (L-Gln route): step 1/1. Catalyzes the synthesis of GMP from XMP. This Vibrio campbellii (strain ATCC BAA-1116) protein is GMP synthase [glutamine-hydrolyzing].